A 333-amino-acid polypeptide reads, in one-letter code: tRNA N6-adenosine threonylcarbamoyltransferase (333 aa).

Positions 110 and 114 each coordinate Fe cation. Residues 133 to 137, Asp-166, Gly-179, Asp-183, and Asn-275 contribute to the substrate site; that span reads IVSGG. Residue Asp-302 participates in Fe cation binding.

This sequence belongs to the KAE1 / TsaD family. The cofactor is Fe(2+).

The protein localises to the cytoplasm. It carries out the reaction L-threonylcarbamoyladenylate + adenosine(37) in tRNA = N(6)-L-threonylcarbamoyladenosine(37) in tRNA + AMP + H(+). In terms of biological role, required for the formation of a threonylcarbamoyl group on adenosine at position 37 (t(6)A37) in tRNAs that read codons beginning with adenine. Is involved in the transfer of the threonylcarbamoyl moiety of threonylcarbamoyl-AMP (TC-AMP) to the N6 group of A37, together with TsaE and TsaB. TsaD likely plays a direct catalytic role in this reaction. The chain is tRNA N6-adenosine threonylcarbamoyltransferase from Thermodesulfovibrio yellowstonii (strain ATCC 51303 / DSM 11347 / YP87).